The sequence spans 439 residues: MNTLDIQRHIADRLAGRRRLLVAFSGGLDSTVLLHALVQLRASCLPHLRLRVVHVHHGLSHFADQWVDHCESVCYLWQVPLHVLHVQVDTQRNSVEAAARDARYQAIAELIDSRETLLTAQHLDDQCETFLLALKRGSGPTGLSAMAQSMPFFVCEQLRPLLDISREQLTAYAQVHDLSWVEDDSNADARFDRNFLRMRIVPLLRERWPHFSEAVARSASLCAEQEQLLDELLMESLQALMSEDDALSIDGLLPLSEAKRYALLRRWIACFGVMMPTREQLQRLWHEVALAREDAEPQLHLAKCQVRRFRRRLYLLPTLRSLRDEVLRWDPHQPLTLPDGLGELQMGSRGVCVRAPTPGEAVTIRFCAQGVLRIVGRRHSRAIKKIWQELHIPPWERERTPMLYYGESLIAALGVFVTQEGQAVAGATMWNIHWSKDWM.

25–30 (SGGLDS) serves as a coordination point for ATP.

The protein belongs to the tRNA(Ile)-lysidine synthase family.

The protein localises to the cytoplasm. The catalysed reaction is cytidine(34) in tRNA(Ile2) + L-lysine + ATP = lysidine(34) in tRNA(Ile2) + AMP + diphosphate + H(+). In terms of biological role, ligates lysine onto the cytidine present at position 34 of the AUA codon-specific tRNA(Ile) that contains the anticodon CAU, in an ATP-dependent manner. Cytidine is converted to lysidine, thus changing the amino acid specificity of the tRNA from methionine to isoleucine. This Edwardsiella ictaluri (strain 93-146) protein is tRNA(Ile)-lysidine synthase.